A 449-amino-acid chain; its full sequence is Chromosomal replication initiator protein DnaA (449 aa).

A domain I, interacts with DnaA modulators region spans residues 1-72; the sequence is MPNLEELWAY…VEGVYEFAQL (72 aa). Positions 72-109 are domain II; that stretch reads LEVDPVIMTKDELQPAPATDQRPAVEEDDQNLTFKAKT. The interval 110-326 is domain III, AAA+ region; the sequence is HLNPKYTFDH…GALVRVQAFS (217 aa). Positions 154, 156, 157, and 158 each coordinate ATP. The tract at residues 327–449 is domain IV, binds dsDNA; it reads TMKNEDITTS…ELRNILKNRG (123 aa).

This sequence belongs to the DnaA family. Oligomerizes as a right-handed, spiral filament on DNA at oriC.

The protein localises to the cytoplasm. Its function is as follows. Plays an essential role in the initiation and regulation of chromosomal replication. ATP-DnaA binds to the origin of replication (oriC) to initiate formation of the DNA replication initiation complex once per cell cycle. Binds the DnaA box (a 9 base pair repeat at the origin) and separates the double-stranded (ds)DNA. Forms a right-handed helical filament on oriC DNA; dsDNA binds to the exterior of the filament while single-stranded (ss)DNA is stabiized in the filament's interior. The ATP-DnaA-oriC complex binds and stabilizes one strand of the AT-rich DNA unwinding element (DUE), permitting loading of DNA polymerase. After initiation quickly degrades to an ADP-DnaA complex that is not apt for DNA replication. Binds acidic phospholipids. The sequence is that of Chromosomal replication initiator protein DnaA from Lacticaseibacillus paracasei (strain ATCC 334 / BCRC 17002 / CCUG 31169 / CIP 107868 / KCTC 3260 / NRRL B-441) (Lactobacillus paracasei).